The primary structure comprises 663 residues: F-box protein DAS1 (663 aa).

Residues 46-91 (VFPLTKLPDELMQEVFSHLPQPDRLQLCLVNKRLNKIATKLLYRRI) enclose the F-box domain.

As to quaternary structure, interacts with SKP1. Component of the probable SCF(DAS1) complex containing CDC53, SKP1, RBX1 and DAS1.

Its pathway is protein modification; protein ubiquitination. Its function is as follows. Substrate recognition component of a SCF (SKP1-CUL1-F-box protein) E3 ubiquitin-protein ligase complex which mediates the ubiquitination and subsequent proteasomal degradation of target proteins. Probably recognizes and binds to phosphorylated target proteins. The protein is F-box protein DAS1 (DAS1) of Saccharomyces cerevisiae (strain ATCC 204508 / S288c) (Baker's yeast).